A 285-amino-acid polypeptide reads, in one-letter code: Methanethiol S-methyltransferase 1 (285 aa).

A run of 5 helical transmembrane segments spans residues 55-75 (AYLVFFVTILYAIGFVMGLVV), 88-108 (AEAVIINLLLMALFAVQHSVM), 132-152 (LFASLSLLLLFWQWRPLPTVI), 162-182 (VTLVTVSFAGWVLVFTSTFII), and 224-244 (FIVAFWAAPVMTAGHLLFAAV).

The protein belongs to the nurim family.

The protein localises to the membrane. The enzyme catalyses methanethiol + S-adenosyl-L-methionine = dimethyl sulfide + S-adenosyl-L-homocysteine + H(+). Functionally, catalyzes the methylation of methanethiol (MeSH) to yield dimethylsulphide (DMS). The chain is Methanethiol S-methyltransferase 1 from Bradyrhizobium diazoefficiens (strain JCM 10833 / BCRC 13528 / IAM 13628 / NBRC 14792 / USDA 110).